A 139-amino-acid polypeptide reads, in one-letter code: uncharacterized protein (139 aa).

A helical transmembrane segment spans residues 43–59 (FGVISTLIAIFIGAFWL).

Its subcellular location is the membrane. This is an uncharacterized protein from Haemophilus influenzae (strain ATCC 51907 / DSM 11121 / KW20 / Rd).